A 434-amino-acid chain; its full sequence is D-amino acid dehydrogenase (434 aa).

An FAD-binding site is contributed by 3–17 (VLVLGSGVIGTTSAW).

It belongs to the DadA oxidoreductase family. It depends on FAD as a cofactor.

The enzyme catalyses a D-alpha-amino acid + A + H2O = a 2-oxocarboxylate + AH2 + NH4(+). It participates in amino-acid degradation; D-alanine degradation; NH(3) and pyruvate from D-alanine: step 1/1. Its function is as follows. Oxidative deamination of D-amino acids. The sequence is that of D-amino acid dehydrogenase from Stenotrophomonas maltophilia (strain R551-3).